A 362-amino-acid polypeptide reads, in one-letter code: tRNA-specific 2-thiouridylase MnmA 1 (362 aa).

Residues 12–19 (GMSGGVDS) and methionine 38 contribute to the ATP site. Catalysis depends on cysteine 104, which acts as the Nucleophile. A disulfide bridge connects residues cysteine 104 and cysteine 200. An ATP-binding site is contributed by glycine 128. Positions 150-152 (KDQ) are interaction with tRNA. Catalysis depends on cysteine 200, which acts as the Cysteine persulfide intermediate. The segment at 306-307 (RY) is interaction with tRNA.

Belongs to the MnmA/TRMU family.

It is found in the cytoplasm. The enzyme catalyses S-sulfanyl-L-cysteinyl-[protein] + uridine(34) in tRNA + AH2 + ATP = 2-thiouridine(34) in tRNA + L-cysteinyl-[protein] + A + AMP + diphosphate + H(+). Functionally, catalyzes the 2-thiolation of uridine at the wobble position (U34) of tRNA, leading to the formation of s(2)U34. The polypeptide is tRNA-specific 2-thiouridylase MnmA 1 (Clostridium tetani (strain Massachusetts / E88)).